Consider the following 312-residue polypeptide: Ribosomal RNA small subunit methyltransferase H (312 aa).

S-adenosyl-L-methionine contacts are provided by residues G34–H36, D54, L83, D99, and Q106.

It belongs to the methyltransferase superfamily. RsmH family.

Its subcellular location is the cytoplasm. It catalyses the reaction cytidine(1402) in 16S rRNA + S-adenosyl-L-methionine = N(4)-methylcytidine(1402) in 16S rRNA + S-adenosyl-L-homocysteine + H(+). Functionally, specifically methylates the N4 position of cytidine in position 1402 (C1402) of 16S rRNA. This chain is Ribosomal RNA small subunit methyltransferase H, found in Rubrobacter xylanophilus (strain DSM 9941 / JCM 11954 / NBRC 16129 / PRD-1).